We begin with the raw amino-acid sequence, 195 residues long: Imidazoleglycerol-phosphate dehydratase (195 aa).

Belongs to the imidazoleglycerol-phosphate dehydratase family.

It is found in the cytoplasm. The catalysed reaction is D-erythro-1-(imidazol-4-yl)glycerol 3-phosphate = 3-(imidazol-4-yl)-2-oxopropyl phosphate + H2O. It participates in amino-acid biosynthesis; L-histidine biosynthesis; L-histidine from 5-phospho-alpha-D-ribose 1-diphosphate: step 6/9. This Parafrankia sp. (strain EAN1pec) protein is Imidazoleglycerol-phosphate dehydratase.